The chain runs to 233 residues: Orotidine 5'-phosphate decarboxylase (233 aa).

Substrate is bound by residues Asp9, Lys31, Asp58–Thr67, Thr120, Arg182, Gln191, Gly211, and Arg212. Lys60 (proton donor) is an active-site residue.

Belongs to the OMP decarboxylase family. Type 1 subfamily. In terms of assembly, homodimer.

It catalyses the reaction orotidine 5'-phosphate + H(+) = UMP + CO2. It participates in pyrimidine metabolism; UMP biosynthesis via de novo pathway; UMP from orotate: step 2/2. Functionally, catalyzes the decarboxylation of orotidine 5'-monophosphate (OMP) to uridine 5'-monophosphate (UMP). This is Orotidine 5'-phosphate decarboxylase from Listeria monocytogenes serovar 1/2a (strain ATCC BAA-679 / EGD-e).